Reading from the N-terminus, the 266-residue chain is Protein SCO2 homolog, mitochondrial (266 aa).

The transit peptide at 1 to 41 (MLLLTRSPTAWHRLSQLKPRVLPGTLGGQALHLRSWLLSRQ) directs the protein to the mitochondrion. Residues 42–60 (GPAETGGQGQPQGPGLRTR) lie on the Mitochondrial matrix side of the membrane. The helical transmembrane segment at 61–78 (LLITGLFGAGLGGAWLAL) threads the bilayer. The Mitochondrial intermembrane portion of the chain corresponds to 79-266 (RAEKERLQQQ…HMAAFRSVLS (188 aa)). The Thioredoxin domain maps to 85-259 (LQQQKRTEAL…ISDSVRRHMA (175 aa)). Residues Cys-133, Cys-137, and His-224 each coordinate Cu cation. An intrachain disulfide couples Cys-133 to Cys-137.

The protein belongs to the SCO1/2 family. As to quaternary structure, homodimer. Interacts with COA6. Found in a complex with TMEM177, COX20, COA6, MT-CO2/COX2, COX18 and SCO1. Interacts with TMEM177 in a COX20-dependent manner. Interacts with COX20 in a MT-CO2/COX2- and COX18-dependent manner. Interacts with COX16. Ubiquitous.

It localises to the mitochondrion inner membrane. Its function is as follows. Copper metallochaperone essential for the synthesis and maturation of cytochrome c oxidase subunit II (MT-CO2/COX2) by facilitating the incorporation of copper into the Cu(A) site of MT-CO2/COX2. Could also act as a thiol-disulfide oxidoreductase to regulate the redox state of the cysteines in SCO1 during maturation of MT-CO2/COX2. This Homo sapiens (Human) protein is Protein SCO2 homolog, mitochondrial (SCO2).